Here is a 323-residue protein sequence, read N- to C-terminus: Formimidoylglutamase (323 aa).

The Mn(2+) site is built by histidine 131, aspartate 157, histidine 159, aspartate 161, cysteine 245, and aspartate 247.

This sequence belongs to the arginase family. Requires Mn(2+) as cofactor.

The catalysed reaction is N-formimidoyl-L-glutamate + H2O = formamide + L-glutamate. Its pathway is amino-acid degradation; L-histidine degradation into L-glutamate; L-glutamate from N-formimidoyl-L-glutamate (hydrolase route): step 1/1. In terms of biological role, catalyzes the conversion of N-formimidoyl-L-glutamate to L-glutamate and formamide. The chain is Formimidoylglutamase from Geobacillus kaustophilus (strain HTA426).